A 345-amino-acid chain; its full sequence is Tryptophan--tRNA ligase (345 aa).

ATP-binding positions include 22 to 24 (QPS) and 30 to 31 (GN). The 'HIGH' region motif lies at 23-31 (PSGELTIGN). Residue Asp146 coordinates L-tryptophan. Residues 158 to 160 (GID), Val197, and 206 to 210 (KMSKS) contribute to the ATP site. The 'KMSKS' region motif lies at 206–210 (KMSKS).

It belongs to the class-I aminoacyl-tRNA synthetase family. In terms of assembly, homodimer.

The protein resides in the cytoplasm. The catalysed reaction is tRNA(Trp) + L-tryptophan + ATP = L-tryptophyl-tRNA(Trp) + AMP + diphosphate + H(+). Its function is as follows. Catalyzes the attachment of tryptophan to tRNA(Trp). The sequence is that of Tryptophan--tRNA ligase from Photorhabdus laumondii subsp. laumondii (strain DSM 15139 / CIP 105565 / TT01) (Photorhabdus luminescens subsp. laumondii).